A 130-amino-acid polypeptide reads, in one-letter code: Large ribosomal subunit protein bL17 (130 aa).

It belongs to the bacterial ribosomal protein bL17 family. Part of the 50S ribosomal subunit. Contacts protein L32.

This chain is Large ribosomal subunit protein bL17, found in Pectobacterium atrosepticum (strain SCRI 1043 / ATCC BAA-672) (Erwinia carotovora subsp. atroseptica).